We begin with the raw amino-acid sequence, 384 residues long: Glucose-fructose oxidoreductase domain-containing protein 2 (384 aa).

The first 25 residues, 1 to 25, serve as a signal peptide directing secretion; the sequence is MMTLPGIGVFGTGNTARVLIQLLRA. The disordered stretch occupies residues 358-384; the sequence is GEWESVELTNEETDSNQNLSEVIQHNL. A compositionally biased stretch (polar residues) spans 372–384; it reads SNQNLSEVIQHNL.

Belongs to the Gfo/Idh/MocA family.

It is found in the secreted. The protein resides in the extracellular space. It localises to the extracellular matrix. In terms of biological role, promotes matrix assembly. The sequence is that of Glucose-fructose oxidoreductase domain-containing protein 2 (gfod2) from Xenopus laevis (African clawed frog).